The primary structure comprises 401 residues: S-adenosylmethionine synthase (401 aa).

136–141 (GQGSVD) serves as a coordination point for ATP.

It belongs to the AdoMet synthase 2 family. The cofactor is Mg(2+).

It catalyses the reaction L-methionine + ATP + H2O = S-adenosyl-L-methionine + phosphate + diphosphate. The protein operates within amino-acid biosynthesis; S-adenosyl-L-methionine biosynthesis; S-adenosyl-L-methionine from L-methionine: step 1/1. Catalyzes the formation of S-adenosylmethionine from methionine and ATP. The chain is S-adenosylmethionine synthase (mat) from Pyrococcus abyssi (strain GE5 / Orsay).